The following is a 372-amino-acid chain: tRNA-specific 2-thiouridylase MnmA (372 aa).

ATP contacts are provided by residues 16–23 and Met-42; that span reads GMSGGVDS. An interaction with target base in tRNA region spans residues 102 to 104; the sequence is NPD. Cys-107 functions as the Nucleophile in the catalytic mechanism. A disulfide bridge connects residues Cys-107 and Cys-205. Gly-132 lines the ATP pocket. The interval 155–157 is interaction with tRNA; sequence KDQ. Catalysis depends on Cys-205, which acts as the Cysteine persulfide intermediate. The interaction with tRNA stretch occupies residues 317 to 318; sequence RY.

It belongs to the MnmA/TRMU family.

The protein resides in the cytoplasm. It carries out the reaction S-sulfanyl-L-cysteinyl-[protein] + uridine(34) in tRNA + AH2 + ATP = 2-thiouridine(34) in tRNA + L-cysteinyl-[protein] + A + AMP + diphosphate + H(+). In terms of biological role, catalyzes the 2-thiolation of uridine at the wobble position (U34) of tRNA, leading to the formation of s(2)U34. This Shewanella putrefaciens (strain CN-32 / ATCC BAA-453) protein is tRNA-specific 2-thiouridylase MnmA.